The sequence spans 61 residues: Protein translocase subunit SecE (61 aa).

Topologically, residues 1 to 34 are cytoplasmic; sequence MAELQERIRHFWKESRRAFLVTKKPNWATYKRAA. Residues 35 to 55 form a helical membrane-spanning segment; it reads KITGLGIILIGLIGMLIRIVG. Over 56 to 61 the chain is Extracellular; the sequence is ILILGG.

This sequence belongs to the SecE/SEC61-gamma family. In terms of assembly, component of the Sec protein translocase complex. Heterotrimer consisting of alpha (SecY), beta (SecG) and gamma (SecE) subunits. The heterotrimers can form oligomers, although 1 heterotrimer is thought to be able to translocate proteins. Interacts with the ribosome. May interact with SecDF, and other proteins may be involved.

It localises to the cell membrane. Its function is as follows. Essential subunit of the protein translocation channel SecYEG. Clamps together the 2 halves of SecY. May contact the channel plug during translocation. This chain is Protein translocase subunit SecE, found in Pyrococcus furiosus (strain ATCC 43587 / DSM 3638 / JCM 8422 / Vc1).